The following is a 294-amino-acid chain: Sarcotoxin II-2 (294 aa).

The first 22 residues, 1 to 22, serve as a signal peptide directing secretion; that stretch reads MKSFVFFAACFAIVALNSLAHA. Residues 23-24 constitute a propeptide, removed by a dipeptidylpeptidase; sequence YP. Residue Q25 is modified to Pyrrolidone carboxylic acid. Position 293 is an arginine amide (R293).

The protein belongs to the attacin/sarcotoxin-2 family. As to expression, synthesized by the fat body and is eventually secreted into the hemolymph.

Its subcellular location is the secreted. Its function is as follows. Sarcotoxin II is an antibacterial protein which plays a role in the inflammatory response of this insect. The main effect of sarcotoxin II on E.coli may be the inhibition of cell wall synthesis, including septum formation. This is Sarcotoxin II-2 from Sarcophaga peregrina (Flesh fly).